Reading from the N-terminus, the 133-residue chain is MTMSDPIADFLTRIRNANMVRHETVETPASKIKINIAQILKDEGFITDYQVVDTPNKQGLISLSLKYGPNRERIITGLKRISKPGLRSYVQADSVPKVLNGLGIAILSTSEGVMTDKAARAKMIGGEVIAYVW.

The protein belongs to the universal ribosomal protein uS8 family. As to quaternary structure, part of the 30S ribosomal subunit. Contacts proteins S5 and S12.

Its function is as follows. One of the primary rRNA binding proteins, it binds directly to 16S rRNA central domain where it helps coordinate assembly of the platform of the 30S subunit. This chain is Small ribosomal subunit protein uS8, found in Oenococcus oeni (strain ATCC BAA-331 / PSU-1).